A 294-amino-acid chain; its full sequence is Nucleotide-binding protein lp_0779 (294 aa).

Residue 12 to 19 participates in ATP binding; that stretch reads GMSGAGKT. Position 62 to 65 (62 to 65) interacts with GTP; sequence DLRS.

Belongs to the RapZ-like family.

In terms of biological role, displays ATPase and GTPase activities. In Lactiplantibacillus plantarum (strain ATCC BAA-793 / NCIMB 8826 / WCFS1) (Lactobacillus plantarum), this protein is Nucleotide-binding protein lp_0779.